Consider the following 940-residue polypeptide: Isoleucine--tRNA ligase (940 aa).

Residues 58–68 (PYANGSIHIGH) carry the 'HIGH' region motif. Glu564 lines the L-isoleucyl-5'-AMP pocket. Positions 605-609 (KMSKS) match the 'KMSKS' region motif. Lys608 contributes to the ATP binding site. 4 residues coordinate Zn(2+): Cys903, Cys906, Cys923, and Cys926.

It belongs to the class-I aminoacyl-tRNA synthetase family. IleS type 1 subfamily. In terms of assembly, monomer. Zn(2+) is required as a cofactor.

It is found in the cytoplasm. The catalysed reaction is tRNA(Ile) + L-isoleucine + ATP = L-isoleucyl-tRNA(Ile) + AMP + diphosphate. Functionally, catalyzes the attachment of isoleucine to tRNA(Ile). As IleRS can inadvertently accommodate and process structurally similar amino acids such as valine, to avoid such errors it has two additional distinct tRNA(Ile)-dependent editing activities. One activity is designated as 'pretransfer' editing and involves the hydrolysis of activated Val-AMP. The other activity is designated 'posttransfer' editing and involves deacylation of mischarged Val-tRNA(Ile). The sequence is that of Isoleucine--tRNA ligase from Shewanella putrefaciens (strain CN-32 / ATCC BAA-453).